Here is a 304-residue protein sequence, read N- to C-terminus: Ribonuclease Z (304 aa).

Zn(2+) contacts are provided by His63, His65, Asp67, His68, His143, Asp213, and His271. Catalysis depends on Asp67, which acts as the Proton acceptor.

This sequence belongs to the RNase Z family. As to quaternary structure, homodimer. Requires Zn(2+) as cofactor.

The catalysed reaction is Endonucleolytic cleavage of RNA, removing extra 3' nucleotides from tRNA precursor, generating 3' termini of tRNAs. A 3'-hydroxy group is left at the tRNA terminus and a 5'-phosphoryl group is left at the trailer molecule.. Functionally, zinc phosphodiesterase, which displays some tRNA 3'-processing endonuclease activity. Probably involved in tRNA maturation, by removing a 3'-trailer from precursor tRNA. This is Ribonuclease Z from Bacteroides fragilis (strain ATCC 25285 / DSM 2151 / CCUG 4856 / JCM 11019 / LMG 10263 / NCTC 9343 / Onslow / VPI 2553 / EN-2).